A 150-amino-acid chain; its full sequence is Ribosomal RNA large subunit methyltransferase H (150 aa).

S-adenosyl-L-methionine contacts are provided by residues L68, G97, and 116-121; that span reads LSAMTL.

This sequence belongs to the RNA methyltransferase RlmH family. Homodimer.

It localises to the cytoplasm. It catalyses the reaction pseudouridine(1915) in 23S rRNA + S-adenosyl-L-methionine = N(3)-methylpseudouridine(1915) in 23S rRNA + S-adenosyl-L-homocysteine + H(+). In terms of biological role, specifically methylates the pseudouridine at position 1915 (m3Psi1915) in 23S rRNA. The polypeptide is Ribosomal RNA large subunit methyltransferase H (Prochlorococcus marinus (strain MIT 9303)).